The chain runs to 452 residues: GTPase Der (452 aa).

2 consecutive EngA-type G domains span residues 4-169 (PIVA…PPPE) and 177-352 (IKVA…EEHR). Residues 10-17 (GRPNVGKS), 57-61 (DTGGL), 120-123 (NKCE), 183-190 (GRPNVGKS), 230-234 (DTAGI), and 295-298 (NKWD) each bind GTP. Residues 353-438 (RRVTTAVINE…PIRLLWRGKK (86 aa)) form the KH-like domain.

It belongs to the TRAFAC class TrmE-Era-EngA-EngB-Septin-like GTPase superfamily. EngA (Der) GTPase family. As to quaternary structure, associates with the 50S ribosomal subunit.

Its function is as follows. GTPase that plays an essential role in the late steps of ribosome biogenesis. This chain is GTPase Der, found in Rippkaea orientalis (strain PCC 8801 / RF-1) (Cyanothece sp. (strain PCC 8801)).